A 199-amino-acid polypeptide reads, in one-letter code: Recombination protein RecR (199 aa).

The segment at 58-73 (CLVCGNVTGSDICPIC) adopts a C4-type zinc-finger fold. The region spanning 81–176 (GEICVVTDVA…AVTGLAQGVP (96 aa)) is the Toprim domain.

The protein belongs to the RecR family.

Its function is as follows. May play a role in DNA repair. It seems to be involved in an RecBC-independent recombinational process of DNA repair. It may act with RecF and RecO. The polypeptide is Recombination protein RecR (Paracoccus denitrificans (strain Pd 1222)).